A 302-amino-acid chain; its full sequence is 4-hydroxy-tetrahydrodipicolinate synthase (302 aa).

A pyruvate-binding site is contributed by Thr-55. The active-site Proton donor/acceptor is Tyr-144. The active-site Schiff-base intermediate with substrate is Lys-172. Val-214 is a pyruvate binding site.

This sequence belongs to the DapA family. Homotetramer; dimer of dimers.

The protein localises to the cytoplasm. The catalysed reaction is L-aspartate 4-semialdehyde + pyruvate = (2S,4S)-4-hydroxy-2,3,4,5-tetrahydrodipicolinate + H2O + H(+). Its pathway is amino-acid biosynthesis; L-lysine biosynthesis via DAP pathway; (S)-tetrahydrodipicolinate from L-aspartate: step 3/4. Its function is as follows. Catalyzes the condensation of (S)-aspartate-beta-semialdehyde [(S)-ASA] and pyruvate to 4-hydroxy-tetrahydrodipicolinate (HTPA). This is 4-hydroxy-tetrahydrodipicolinate synthase from Synechococcus sp. (strain CC9311).